A 243-amino-acid polypeptide reads, in one-letter code: Glycerophosphodiester phosphodiesterase (243 aa).

The 237-residue stretch at Thr-3–Val-239 folds into the GP-PDE domain. His-8 functions as the Proton acceptor in the catalytic mechanism. Ca(2+)-binding residues include Glu-35 and Asp-37. The active-site Proton donor is His-50. A Ca(2+)-binding site is contributed by Glu-110.

Belongs to the glycerophosphoryl diester phosphodiesterase family. Homodimer. Requires Mg(2+) as cofactor. The cofactor is Ca(2+).

The enzyme catalyses a sn-glycero-3-phosphodiester + H2O = an alcohol + sn-glycerol 3-phosphate + H(+). The catalysed reaction is sn-glycerol 3-phosphocholine + H2O = sn-glycerol 3-phosphate + choline + H(+). Inhibited by EDTA. Functionally, glycerophosphodiester phosphodiesterase hydrolyzes glycerophosphodiesters into glycerol-3-phosphate (G3P) and the corresponding alcohol. Can use glycerophosphocholine. The polypeptide is Glycerophosphodiester phosphodiesterase (Caldanaerobacter subterraneus subsp. tengcongensis (strain DSM 15242 / JCM 11007 / NBRC 100824 / MB4) (Thermoanaerobacter tengcongensis)).